Reading from the N-terminus, the 275-residue chain is Bis(5'-nucleosyl)-tetraphosphatase, symmetrical (275 aa).

It belongs to the Ap4A hydrolase family.

It carries out the reaction P(1),P(4)-bis(5'-adenosyl) tetraphosphate + H2O = 2 ADP + 2 H(+). Its function is as follows. Hydrolyzes diadenosine 5',5'''-P1,P4-tetraphosphate to yield ADP. The polypeptide is Bis(5'-nucleosyl)-tetraphosphatase, symmetrical (Marinomonas sp. (strain MWYL1)).